Reading from the N-terminus, the 95-residue chain is MTKSELIEKLATRQSQLSAKEVESAVKEMLEQMATTLESGERIEIRGFGSFSLHYRAPRTGRNPKTGTSVELEGKYVPHFKPGKELRERVDAVNV.

It belongs to the bacterial histone-like protein family. Heterodimer of an alpha and a beta chain.

Its function is as follows. This protein is one of the two subunits of integration host factor, a specific DNA-binding protein that functions in genetic recombination as well as in transcriptional and translational control. This chain is Integration host factor subunit beta, found in Shewanella amazonensis (strain ATCC BAA-1098 / SB2B).